We begin with the raw amino-acid sequence, 160 residues long: Transcription antitermination protein NusB (160 aa).

Belongs to the NusB family.

In terms of biological role, involved in transcription antitermination. Required for transcription of ribosomal RNA (rRNA) genes. Binds specifically to the boxA antiterminator sequence of the ribosomal RNA (rrn) operons. The polypeptide is Transcription antitermination protein NusB (Nitrobacter hamburgensis (strain DSM 10229 / NCIMB 13809 / X14)).